We begin with the raw amino-acid sequence, 295 residues long: Acetylglutamate kinase (295 aa).

Residues 64–65 (GG), arginine 86, and asparagine 190 each bind substrate.

The protein belongs to the acetylglutamate kinase family. ArgB subfamily.

The protein resides in the cytoplasm. It carries out the reaction N-acetyl-L-glutamate + ATP = N-acetyl-L-glutamyl 5-phosphate + ADP. Its pathway is amino-acid biosynthesis; L-arginine biosynthesis; N(2)-acetyl-L-ornithine from L-glutamate: step 2/4. Catalyzes the ATP-dependent phosphorylation of N-acetyl-L-glutamate. The sequence is that of Acetylglutamate kinase from Heliobacterium modesticaldum (strain ATCC 51547 / Ice1).